Consider the following 530-residue polypeptide: Bifunctional purine biosynthesis protein PurH (530 aa).

One can recognise an MGS-like domain in the interval 1–148 (MNNARPIRRA…KNHKDVTIVV (148 aa)).

The protein belongs to the PurH family.

The catalysed reaction is (6R)-10-formyltetrahydrofolate + 5-amino-1-(5-phospho-beta-D-ribosyl)imidazole-4-carboxamide = 5-formamido-1-(5-phospho-D-ribosyl)imidazole-4-carboxamide + (6S)-5,6,7,8-tetrahydrofolate. It carries out the reaction IMP + H2O = 5-formamido-1-(5-phospho-D-ribosyl)imidazole-4-carboxamide. It functions in the pathway purine metabolism; IMP biosynthesis via de novo pathway; 5-formamido-1-(5-phospho-D-ribosyl)imidazole-4-carboxamide from 5-amino-1-(5-phospho-D-ribosyl)imidazole-4-carboxamide (10-formyl THF route): step 1/1. It participates in purine metabolism; IMP biosynthesis via de novo pathway; IMP from 5-formamido-1-(5-phospho-D-ribosyl)imidazole-4-carboxamide: step 1/1. The chain is Bifunctional purine biosynthesis protein PurH from Vibrio parahaemolyticus serotype O3:K6 (strain RIMD 2210633).